Consider the following 536-residue polypeptide: Phosphoenolpyruvate carboxykinase (ATP) (536 aa).

The substrate site is built by Arg-63, Tyr-203, and Lys-209. ATP is bound by residues Lys-209, His-228, and 244-252 (GLSGTGKTT). Lys-209 and His-228 together coordinate Mn(2+). Residue Asp-265 coordinates Mn(2+). Residues Glu-293, Arg-329, 445-446 (RI), and Thr-451 each bind ATP. Arg-329 contacts substrate.

It belongs to the phosphoenolpyruvate carboxykinase (ATP) family. Monomer. The cofactor is Mn(2+).

The protein resides in the cytoplasm. The catalysed reaction is oxaloacetate + ATP = phosphoenolpyruvate + ADP + CO2. The protein operates within carbohydrate biosynthesis; gluconeogenesis. Its function is as follows. Involved in the gluconeogenesis. Catalyzes the conversion of oxaloacetate (OAA) to phosphoenolpyruvate (PEP) through direct phosphoryl transfer between the nucleoside triphosphate and OAA. In Colwellia psychrerythraea (strain 34H / ATCC BAA-681) (Vibrio psychroerythus), this protein is Phosphoenolpyruvate carboxykinase (ATP).